We begin with the raw amino-acid sequence, 407 residues long: MMNRKQTVGVRVGSVRIGGGAPIVVQSMTNTDTADVAGTVRQVIDLARAGSELVRITVNNEEAAEAVPRIREELDRQGCNVPLVGDFHFNGHKLLDKYPACAEALGKFRINPGNVGRGSKRDPQFAQMIEFACRYDKPVRIGVNWGSLDQSVLARLLDENARLAEPRPLPEVMREAVITSALESAEKAQGLGLPKDRIVLSCKMSGVQELISVYEALSSRCDHALHLGLTEAGMGSKGIVASTAALSVLLQQGIGDTIRISLTPEPGADRSLEVIVAQEILQTMGLRSFTPMVISCPGCGRTTSDYFQKLAQQIQTHLRHKMPEWRRRYRGVEDMHVAVMGCVVNGPGESKNANIGISLPGTGEQPVAPVFEDGVKTVTLKGDRIAEEFQELVERYIETHYGSRAEA.

Positions 296, 299, 342, and 349 each coordinate [4Fe-4S] cluster.

It belongs to the IspG family. The cofactor is [4Fe-4S] cluster.

It catalyses the reaction (2E)-4-hydroxy-3-methylbut-2-enyl diphosphate + oxidized [flavodoxin] + H2O + 2 H(+) = 2-C-methyl-D-erythritol 2,4-cyclic diphosphate + reduced [flavodoxin]. Its pathway is isoprenoid biosynthesis; isopentenyl diphosphate biosynthesis via DXP pathway; isopentenyl diphosphate from 1-deoxy-D-xylulose 5-phosphate: step 5/6. Functionally, converts 2C-methyl-D-erythritol 2,4-cyclodiphosphate (ME-2,4cPP) into 1-hydroxy-2-methyl-2-(E)-butenyl 4-diphosphate. The sequence is that of 4-hydroxy-3-methylbut-2-en-1-yl diphosphate synthase (flavodoxin) from Methylococcus capsulatus (strain ATCC 33009 / NCIMB 11132 / Bath).